The chain runs to 247 residues: 14-3-3 protein gamma-1 (247 aa).

Belongs to the 14-3-3 family. Homodimer, and heterodimer with other family members.

It is found in the cytoplasm. Adapter protein implicated in the regulation of a large spectrum of both general and specialized signaling pathways. Binds to a large number of partners, usually by recognition of a phosphoserine or phosphothreonine motif. Binding generally results in the modulation of the activity of the binding partner. This is 14-3-3 protein gamma-1 (ywhag1) from Danio rerio (Zebrafish).